Here is a 1064-residue protein sequence, read N- to C-terminus: Serine/threonine protein kinase KIN1 (1064 aa).

Residues Met-1–His-113 are disordered. Residues Thr-8–Ala-36 are compositionally biased toward polar residues. Positions Ala-74–Ala-91 are enriched in basic and acidic residues. Residues Lys-93–Met-108 are compositionally biased toward polar residues. A Protein kinase domain is found at Trp-120–Met-398. ATP contacts are provided by residues Val-126–Val-134 and Lys-149. Asp-269 functions as the Proton acceptor in the catalytic mechanism. A Phosphoserine modification is found at Ser-534. The disordered stretch occupies residues Ser-549–Gln-621. The segment covering Thr-557 to Gly-571 has biased composition (polar residues). Ser-593 bears the Phosphoserine mark. Positions Lys-598–Glu-608 are enriched in basic and acidic residues. Ser-646 carries the post-translational modification Phosphoserine. Disordered stretches follow at residues Thr-652 to His-672, Met-694 to Leu-714, Glu-762 to Arg-797, Leu-823 to Asp-843, and His-958 to Thr-1016. A compositionally biased stretch (polar residues) spans Glu-654–Lys-670. At Ser-764 the chain carries Phosphoserine. Over residues Lys-779–His-794 the composition is skewed to basic residues. Polar residues-rich tracts occupy residues Asp-832 to Asp-843, Arg-963 to Glu-989, and Gly-998 to Thr-1016. Ser-986 is subject to Phosphoserine. The 50-residue stretch at Thr-1015–Leu-1064 folds into the KA1 domain.

It belongs to the protein kinase superfamily. CAMK Ser/Thr protein kinase family. NIM1 subfamily. In terms of assembly, interacts with SEC9 and SRO7. In terms of processing, autophosphorylated.

The protein resides in the cytoplasm. The protein localises to the cell membrane. The enzyme catalyses L-seryl-[protein] + ATP = O-phospho-L-seryl-[protein] + ADP + H(+). It carries out the reaction L-threonyl-[protein] + ATP = O-phospho-L-threonyl-[protein] + ADP + H(+). Serine/threonine protein kinase involved in the regulation of exocytosis. Induces phosphorylation of SEC9 and its release from the plasma membrane to the cytosol. The polypeptide is Serine/threonine protein kinase KIN1 (KIN1) (Saccharomyces cerevisiae (strain ATCC 204508 / S288c) (Baker's yeast)).